A 663-amino-acid chain; its full sequence is Polyunsaturated fatty acid lipoxygenase ALOX15 (663 aa).

One can recognise a PLAT domain in the interval 2–115 (GVYRIRVSTG…ILSLPEGTGC (114 aa)). The Lipoxygenase domain maps to 116–663 (TVVEDSQGLF…PSMVENSVAI (548 aa)). Ser149 is modified (phosphoserine). Residues His361, His366, His541, His545, and Ile663 each coordinate Fe cation.

Belongs to the lipoxygenase family. As to quaternary structure, interacts with PEBP1; in response to IL13/interleukin-13, prevents the interaction of PEBP1 with RAF1 to activate the ERK signaling cascade. Requires Fe cation as cofactor. In terms of tissue distribution, detected in leukocytes, lung and aorta.

The protein localises to the cytoplasm. The protein resides in the cytosol. It is found in the cell membrane. Its subcellular location is the lipid droplet. It carries out the reaction (5Z,8Z,11Z,14Z)-eicosatetraenoate + O2 = (12S)-hydroperoxy-(5Z,8Z,10E,14Z)-eicosatetraenoate. The enzyme catalyses (5Z,8Z,11Z,14Z)-eicosatetraenoate + O2 = (15S)-hydroperoxy-(5Z,8Z,11Z,13E)-eicosatetraenoate. The catalysed reaction is (9Z,12Z)-octadecadienoate + O2 = (13S)-hydroperoxy-(9Z,11E)-octadecadienoate. It catalyses the reaction (12S)-hydroperoxy-(5Z,8Z,10E,14Z)-eicosatetraenoate = (8S)-hydroxy-(11S,12S)-epoxy-(5Z,9E,14Z)-eicosatrienoate. It carries out the reaction (5Z,8Z,11Z,14Z)-eicosatetraenoate + 2 O2 = (14R,15S)-dihydroperoxy-(5Z,8Z,10E,12E)-eicosatetraenoate. The enzyme catalyses (5Z,8Z,11Z,14Z)-eicosatetraenoate + 2 O2 = (8S,15S)-dihydroperoxy-(5Z,9E,11Z,13E)-eicosatetraenoate. The catalysed reaction is (14S,15R)-epoxy-(5Z,8Z,11Z)-eicosatrienoate + O2 = (8S)-hydroperoxy-(14S,15R)-epoxy-(5Z,9E,11Z)-eicosatrienoate. It catalyses the reaction (14S,15R)-epoxy-(5Z,8Z,11Z)-eicosatrienoate + O2 = (12S)-hydroperoxy-(14S,15R)-epoxy-(5Z,8Z,10E)-eicosatrienoate. It carries out the reaction (14R,15S)-epoxy-(5Z,8Z,11Z)-eicosatrienoate + O2 = (5S)-hydroperoxy-(14R,15S)-epoxy-(6E,8Z,11Z)-eicosatrienoate. The enzyme catalyses (14R,15S)-epoxy-(5Z,8Z,11Z)-eicosatrienoate + O2 = (12S)-hydroperoxy-(14R,15S)-epoxy-(5Z,8Z,10E)-eicosatrienoate. The catalysed reaction is (15R)-hydroperoxy-(5Z,8Z,11Z,13E)-eicosatetraenoate = 15-oxo-(5Z,8Z,11Z,13E)-eicosatetraenoate + H2O. It catalyses the reaction (15S)-hydroperoxy-(5Z,8Z,11Z,13E)-eicosatetraenoate = (14S,15S)-epoxy-(5Z,8Z,10E,12E)-eicosatetraenoate + H2O. It carries out the reaction (4Z,7Z,10Z,13Z,16Z)-docosapentaenoate + O2 = 14-hydroperoxy-(4Z,7Z,10Z,12E,16Z)-docosapentaenoate. The enzyme catalyses (7Z,10Z,13Z,16Z,19Z)-docosapentaenoate + O2 = 14-hydroperoxy-(7Z,10Z,12E,16Z,19Z)-docosapentaenoate. The catalysed reaction is (4Z,7Z,10Z,13Z,16Z,19Z)-docosahexaenoate + O2 = (14S)-hydroperoxy-(4Z,7Z,10Z,12E,16Z,19Z)-docosahexaenoate. It catalyses the reaction (4Z,7Z,10Z,13Z,16Z,19Z)-docosahexaenoate + O2 = (17S)-hydroperoxy-(4Z,7Z,10Z,13Z,15E,19Z)-docosahexaenoate. It carries out the reaction (7S)-hydroperoxy-(4Z,8E,10Z,13Z,16Z,19Z)-docosahexaenoate + O2 = (7S,14S)-dihydroperoxy-(4Z,8E,10Z,12E,16Z,19Z)-docosahexaenoate. The enzyme catalyses (7S)-hydroperoxy-(4Z,8E,10Z,13Z,16Z,19Z)-docosahexaenoate + O2 = (7S,17S)-dihydroperoxy-(4Z,8E,10Z,13Z,15E,19Z)-docosahexaenoate. The catalysed reaction is (4Z,7Z,10Z,13Z,16Z,19Z)-docosahexaenoate + O2 = (11S)-hydroperoxy-(4Z,7Z,9E,13Z,16Z,19Z)-docosahexaenoate. It catalyses the reaction N-(5Z,8Z,11Z,14Z)-eicosatetraenoyl-taurine + O2 = N-(12S)-hydroperoxy-(5Z,8Z,10E,14Z)-eicosatetraenoyl-taurine. It carries out the reaction N-(5Z,8Z,11Z,14Z)-eicosatetraenoyl-gamma-aminobutanoate + O2 = N-(12S)-hydroperoxy-(5Z,8Z,10E,14Z)-eicosatetraenoyl-gamma-aminobutanoate. The enzyme catalyses N-(5Z,8Z,11Z,14Z)-eicosatetraenoyl-glycine + O2 = N-(12S)-hydroperoxy-(5Z,8Z,10E,14Z)-eicosatetraenoyl-glycine. The catalysed reaction is N-(5Z,8Z,11Z,14Z)-eicosatetraenoyl-L-alanine + O2 = N-(12S)-hydroperoxy-(5Z,8Z,10E,14Z)-eicosatetraenoyl-alanine. It catalyses the reaction N-(5Z,8Z,11Z,14Z)-eicosatetraenoyl-taurine + O2 = N-(15S)-hydroperoxy-(5Z,8Z,11Z,13E)-eicosatetraenoyl-taurine. It carries out the reaction N-(5Z,8Z,11Z,14Z)-eicosatetraenoyl-gamma-aminobutanoate + O2 = N-(15S)-hydroperoxy-(5Z,8Z,11Z,13E)-eicosatetraenoyl-gamma-aminobutanoate. The enzyme catalyses N-(5Z,8Z,11Z,14Z)-eicosatetraenoyl-glycine + O2 = N-(15S)-hydroperoxy-(5Z,8Z,11Z,13E)-eicosatetraenoyl-glycine. The catalysed reaction is N-(5Z,8Z,11Z,14Z)-eicosatetraenoyl-L-alanine + O2 = N-(15S)-hydroperoxy-(5Z,8Z,11Z,13E)-eicosatetraenoyl-alanine. It participates in lipid metabolism; hydroperoxy eicosatetraenoic acid biosynthesis. Its function is as follows. Non-heme iron-containing dioxygenase that catalyzes the stereo-specific peroxidation of free and esterified polyunsaturated fatty acids generating a spectrum of bioactive lipid mediators. It inserts peroxyl groups at C12 or C15 of arachidonate ((5Z,8Z,11Z,14Z)-eicosatetraenoate) producing both 12-hydroperoxyeicosatetraenoate/12-HPETE and 15-hydroperoxyeicosatetraenoate/15-HPETE. It may then act on 12-HPETE to produce hepoxilins, which may show pro-inflammatory properties. Can also peroxidize linoleate ((9Z,12Z)-octadecadienoate) to 13-hydroperoxyoctadecadienoate. May participate in the sequential oxidations of DHA ((4Z,7Z,10Z,13Z,16Z,19Z)-docosahexaenoate) to generate specialized pro-resolving mediators (SPMs)like resolvin D5 ((7S,17S)-diHPDHA) and (7S,14S)-diHPDHA, that actively down-regulate the immune response and have anti-aggregation properties with platelets. Can convert epoxy fatty acids to hydroperoxy-epoxides derivatives followed by an intramolecular nucleophilic substitution leading to the formation of monocyclic endoperoxides. Plays an important role during the maintenance of self-tolerance by peroxidizing membrane-bound phosphatidylethanolamine which can then signal the sorting process for clearance of apoptotic cells during inflammation and prevent an autoimmune response. In addition to its role in the immune and inflammatory responses, this enzyme may play a role in epithelial wound healing in the cornea through production of lipoxin A4 (LXA(4)) and docosahexaenoic acid-derived neuroprotectin D1 (NPD1; 10R,17S-HDHA), both lipid autacoids exhibit anti-inflammatory and neuroprotective properties. Furthermore, it may regulate actin polymerization which is crucial for several biological processes such as the phagocytosis of apoptotic cells. It is also implicated in the generation of endogenous ligands for peroxisome proliferator activated receptor (PPAR-gamma), hence modulating macrophage development and function. It may also exert a negative effect on skeletal development by regulating bone mass through this pathway. As well as participates in ER stress and downstream inflammation in adipocytes, pancreatic islets, and liver. Finally, it is also involved in the cellular response to IL13/interleukin-13. The protein is Polyunsaturated fatty acid lipoxygenase ALOX15 of Rattus norvegicus (Rat).